Consider the following 226-residue polypeptide: Leucyl/phenylalanyl-tRNA--protein transferase (226 aa).

Belongs to the L/F-transferase family.

Its subcellular location is the cytoplasm. The catalysed reaction is N-terminal L-lysyl-[protein] + L-leucyl-tRNA(Leu) = N-terminal L-leucyl-L-lysyl-[protein] + tRNA(Leu) + H(+). The enzyme catalyses N-terminal L-arginyl-[protein] + L-leucyl-tRNA(Leu) = N-terminal L-leucyl-L-arginyl-[protein] + tRNA(Leu) + H(+). It catalyses the reaction L-phenylalanyl-tRNA(Phe) + an N-terminal L-alpha-aminoacyl-[protein] = an N-terminal L-phenylalanyl-L-alpha-aminoacyl-[protein] + tRNA(Phe). Its function is as follows. Functions in the N-end rule pathway of protein degradation where it conjugates Leu, Phe and, less efficiently, Met from aminoacyl-tRNAs to the N-termini of proteins containing an N-terminal arginine or lysine. This Stutzerimonas stutzeri (strain A1501) (Pseudomonas stutzeri) protein is Leucyl/phenylalanyl-tRNA--protein transferase.